We begin with the raw amino-acid sequence, 160 residues long: Fluoride-specific ion channel FluC (160 aa).

4 helical membrane-spanning segments follow: residues 5–25, 34–54, 67–87, and 99–119; these read LFIS…GLLF, FGTL…LGLF, FLIT…SEVV, and FCVL…GIWI. Residues glycine 74 and threonine 77 each coordinate Na(+).

Belongs to the fluoride channel Fluc/FEX (TC 1.A.43) family.

It localises to the cell inner membrane. It carries out the reaction fluoride(in) = fluoride(out). Its activity is regulated as follows. Na(+) is not transported, but it plays an essential structural role and its presence is essential for fluoride channel function. Fluoride-specific ion channel. Important for reducing fluoride concentration in the cell, thus reducing its toxicity. The chain is Fluoride-specific ion channel FluC from Haemophilus influenzae (strain ATCC 51907 / DSM 11121 / KW20 / Rd).